The following is a 955-amino-acid chain: MSRLSGITPRARDDRSQFQNPRLEIAVPDRTAGLQRTKRTLLVKCVLDETKQTIQHVVTEKNEGTLLDAASIASSIKYHAEFSPAFSPERFELPKAYFATAQSVRDALIVNWNATYDYYEKLNMKQAYYLSMEFLQGRALLNAIGNLELTGEYAEALNKLGHNLENVASKEPDAALGNGGLGRLASCFLDSLATLNYPAWGYGLRYKYGLFKQRITKDGQEEVAEDWLELGNPWEIIRMDVSYPVKFFGKVITGSDGKKHWIGGEDILAVAYDVPIPGYKTRTTISLRLWSTKVPSEDFDLYSFNAGEHTKACEAQANAEKICYILYPGDESIEGKILRLKQQYTLCSASLQDIIARFERRSGEYVKWEEFPEKVAVQMNDTHPTLCIPELIRILIDLKGLSWKEAWNITQRTVAYTNHTVLPEALEKWSYELMEKLLPRHIEIIEMIDEQLINEIVSEYGTSDLDMLEKKLNDMRILENFDIPSSIANLFTKPKETSIVDPSEEVEVSGKVVTESVEVSDKVVTESEKDELEEKDTELEKDEDPVPAPIPPKMVRMANLCVVGGHAVNGVAEIHSDIVKEDVFNDFYQLWPEKFQNKTNGVTPRRWIRFCNPALSNIITKWIGTEDWVLNTEKLAELRKFADNEDLQIEWRAAKRSNKVKVASFLKERTGYSVSPNAMFDIQVKRIHEYKRQLLNILGIVYRYKQMKEMSAREREAKFVPRVCIFGGKAFATYVQAKRIAKFITDVGATINHDPEIGDLLKVIFVPDYNVSAAELLIPASGLSQHISTAGMEASGQSNMKFAMNGCILIGTLDGANVEIRQEVGEENFFLFGAEAHEIAGLRKERAEGKFVPDERFEEVKEFIKRGVFGSNTYDELLGSLEGNEGFGRGDYFLVGKDFPSYIECQEKVDEAYRDQKIWTRMSILNTAGSYKFSSDRTIHEYAKDIWNIQPVVFP.

The transit peptide at 1 to 43 (MSRLSGITPRARDDRSQFQNPRLEIAVPDRTAGLQRTKRTLLV) directs the protein to the chloroplast. Residues 522-550 (KVVTESEKDELEEKDTELEKDEDPVPAPI) are disordered. Acidic residues predominate over residues 528–545 (EKDELEEKDTELEKDEDP). The residue at position 801 (Lys-801) is an N6-(pyridoxal phosphate)lysine.

It belongs to the glycogen phosphorylase family. Requires pyridoxal 5'-phosphate as cofactor.

Its subcellular location is the plastid. The protein resides in the chloroplast. It localises to the amyloplast. It carries out the reaction [(1-&gt;4)-alpha-D-glucosyl](n) + phosphate = [(1-&gt;4)-alpha-D-glucosyl](n-1) + alpha-D-glucose 1-phosphate. Phosphorylase is an important allosteric enzyme in carbohydrate metabolism. Enzymes from different sources differ in their regulatory mechanisms and in their natural substrates. However, all known phosphorylases share catalytic and structural properties. This chain is Alpha-1,4 glucan phosphorylase L isozyme, chloroplastic/amyloplastic, found in Ipomoea batatas (Sweet potato).